The chain runs to 372 residues: Putative glutamate--cysteine ligase 2 (372 aa).

It belongs to the glutamate--cysteine ligase type 2 family. YbdK subfamily. As to quaternary structure, homodimer.

It catalyses the reaction L-cysteine + L-glutamate + ATP = gamma-L-glutamyl-L-cysteine + ADP + phosphate + H(+). Its function is as follows. ATP-dependent carboxylate-amine ligase which exhibits weak glutamate--cysteine ligase activity. This is Putative glutamate--cysteine ligase 2 (ybdK) from Escherichia coli O8 (strain IAI1).